We begin with the raw amino-acid sequence, 334 residues long: Glyoxylate reductase (334 aa).

NADP(+)-binding positions include 158–161, 180–182, and 239–241; these read FGRI, SRT, and IAR. Residues arginine 241 and glutamate 270 contribute to the active site. Histidine 288 serves as the catalytic Proton donor. Residue 288–290 coordinates NADP(+); sequence HIG.

The protein belongs to the D-isomer specific 2-hydroxyacid dehydrogenase family. GyaR subfamily. As to quaternary structure, homodimer.

The protein resides in the cytoplasm. It carries out the reaction glycolate + NAD(+) = glyoxylate + NADH + H(+). The sequence is that of Glyoxylate reductase from Thermococcus onnurineus (strain NA1).